Consider the following 189-residue polypeptide: Casparian strip membrane protein 1 (189 aa).

Residues 1-42 (MEKNESSAIEIAESSKERKGKAPLLAAAVGHDRAAGYKRGVS) lie on the Cytoplasmic side of the membrane. The helical transmembrane segment at 43–63 (IFDLILRISAATAALAATIVM) threads the bilayer. Residues 64-90 (GTTEQTLPFFTQFFQFRAQYDDLPTFT) are Extracellular-facing. The chain crosses the membrane as a helical span at residues 91 to 111 (FFVVGMAIVTGYLILSVPLSI). At 112–130 (VCIARPVAIGPRFLLIVCD) the chain is on the cytoplasmic side. The helical transmembrane segment at 131-151 (TVTAVLATSAAGSSAAIVYLA) threads the bilayer. Over 152–189 (HNGNSDANWLAICQQFNDFCQRVSGAVVAAFVAVVCSS) the chain is Extracellular.

The protein belongs to the Casparian strip membrane proteins (CASP) family. As to quaternary structure, homodimer and heterodimers.

The protein resides in the cell membrane. Functionally, regulates membrane-cell wall junctions and localized cell wall deposition. Required for establishment of the Casparian strip membrane domain (CSD) and the subsequent formation of Casparian strips, a cell wall modification of the root endodermis that determines an apoplastic barrier between the intraorganismal apoplasm and the extraorganismal apoplasm and prevents lateral diffusion. This is Casparian strip membrane protein 1 from Striga asiatica (Asiatic witchweed).